Here is a 407-residue protein sequence, read N- to C-terminus: MLSMSPIIHSLLDTDLYKFTMLQVVLHQFPQTHSVYHFRCRNLDETQYPLTDILDDLNEQLDHLCTLKFKDDELQYLRSFRFIKSDFVDYLELFQLKRRFITAGIDEEGRLDIWVEGPMVQAMMFEIFVLAIVNELYFRRIRSDAVLEEGERRLQAKLALLEQYQTQHQSDEPPFLVSDFGTRRRYSFEWQKHVIAAFHHHFPNIFRGTSNVLLAKELNITPIGTMAHEFLQAFQALDVRLRDFQKAALETWVQEYRGDLGIALTDVVGMDAFLRDFDLYFAKLFDGLRHDSGDPYEWGDKAYAHYRKLKIDTKTKMLTFSDGLNLEKAWELHQYFKGRFKVSFGIGTNLTNDMGQTPLNIVLKLVECNGQSVAKISDSPGKTMTDNDTFLAYLRQVFQIAEEEPVA.

His-228 carries the phosphohistidine; by autocatalysis modification.

It belongs to the NAPRTase family. Transiently phosphorylated on a His residue during the reaction cycle. Phosphorylation strongly increases the affinity for substrates and increases the rate of nicotinate D-ribonucleotide production. Dephosphorylation regenerates the low-affinity form of the enzyme, leading to product release.

The catalysed reaction is nicotinate + 5-phospho-alpha-D-ribose 1-diphosphate + ATP + H2O = nicotinate beta-D-ribonucleotide + ADP + phosphate + diphosphate. It functions in the pathway cofactor biosynthesis; NAD(+) biosynthesis; nicotinate D-ribonucleotide from nicotinate: step 1/1. 100-fold more active in the presence of saturating ATP. Functionally, catalyzes the synthesis of beta-nicotinate D-ribonucleotide from nicotinate and 5-phospho-D-ribose 1-phosphate at the expense of ATP. Functions in the deamidating salvage pathway for production of NAD from nicotinamide. Displays a strict preference for nicotinate over nicotinamide substrate. The polypeptide is Nicotinate phosphoribosyltransferase (Acinetobacter baylyi (strain ATCC 33305 / BD413 / ADP1)).